The following is a 227-amino-acid chain: Enolase-phosphatase E1 (227 aa).

The protein belongs to the HAD-like hydrolase superfamily. MasA/MtnC family. In terms of assembly, monomer. Requires Mg(2+) as cofactor.

The enzyme catalyses 5-methylsulfanyl-2,3-dioxopentyl phosphate + H2O = 1,2-dihydroxy-5-(methylsulfanyl)pent-1-en-3-one + phosphate. It functions in the pathway amino-acid biosynthesis; L-methionine biosynthesis via salvage pathway; L-methionine from S-methyl-5-thio-alpha-D-ribose 1-phosphate: step 3/6. It participates in amino-acid biosynthesis; L-methionine biosynthesis via salvage pathway; L-methionine from S-methyl-5-thio-alpha-D-ribose 1-phosphate: step 4/6. Its function is as follows. Bifunctional enzyme that catalyzes the enolization of 2,3-diketo-5-methylthiopentyl-1-phosphate (DK-MTP-1-P) into the intermediate 2-hydroxy-3-keto-5-methylthiopentenyl-1-phosphate (HK-MTPenyl-1-P), which is then dephosphorylated to form the acireductone 1,2-dihydroxy-3-keto-5-methylthiopentene (DHK-MTPene). The sequence is that of Enolase-phosphatase E1 from Pseudomonas syringae pv. tomato (strain ATCC BAA-871 / DC3000).